The chain runs to 240 residues: Eukaryotic translation initiation factor 4E-3 (240 aa).

Positions 1–51 (MVVTDSPVSGIMADQNIDPNTTTSPSPKEKHVSAIKAISGDEKAPSKEKKN) are disordered. Residues 17–26 (IDPNTTTSPS) are compositionally biased toward polar residues. Over residues 39-51 (SGDEKAPSKEKKN) the composition is skewed to basic and acidic residues. EIF4G-binding regions lie at residues 65–68 (HCFQ) and 75–111 (FDNPSSKSNQVIWGSSLRSLYTFGTIEEFWSLYNNIH). MRNA contacts are provided by residues 83-88 (NQVIWG), lysine 115, and 133-134 (WE). The cysteines at positions 138 and 176 are disulfide-linked. Positions 159-168 (NTLLALVGEQ) are EIF4G-binding. Residues 183-188 (RARGDR) and 228-232 (KTLDR) contribute to the mRNA site.

It belongs to the eukaryotic initiation factor 4E family. In terms of assembly, EIF4F is a multi-subunit complex, the composition of which varies with external and internal environmental conditions. It is composed of at least EIF4A, EIF4E and EIF4G. EIF4E is also known to interact with other partners. In higher plants two isoforms of EIF4F have been identified, named isoform EIF4F and isoform EIF(iso)4F. Isoform EIF4F has subunits p220 and p26, whereas isoform EIF(iso)4F has subunits p82 and p28. Post-translationally, according to the redox status, the Cys-138-Cys-176 disulfide bridge may have a role in regulating protein function by affecting its ability to bind capped mRNA.

Its subcellular location is the nucleus. The protein resides in the cytoplasm. Its function is as follows. Component of the protein complex eIF4F, which is involved in the recognition of the mRNA cap, ATP-dependent unwinding of 5'-terminal secondary structure and recruitment of mRNA to the ribosome. Recognizes and binds the 7-methylguanosine-containing mRNA cap during an early step in the initiation of protein synthesis and facilitates ribosome binding by inducing the unwinding of the mRNAs secondary structures. The polypeptide is Eukaryotic translation initiation factor 4E-3 (Arabidopsis thaliana (Mouse-ear cress)).